The primary structure comprises 399 residues: PCI domain-containing protein 2 (399 aa).

The region spanning 210–391 (VTFKYYVGRK…QKLVVSKQNP (182 aa)) is the PCI domain.

This sequence belongs to the CSN12 family.

The sequence is that of PCI domain-containing protein 2 (pcid2) from Xenopus laevis (African clawed frog).